Consider the following 182-residue polypeptide: Large ribosomal subunit protein bL25 (182 aa).

It belongs to the bacterial ribosomal protein bL25 family. CTC subfamily. In terms of assembly, part of the 50S ribosomal subunit; part of the 5S rRNA/L5/L18/L25 subcomplex. Contacts the 5S rRNA. Binds to the 5S rRNA independently of L5 and L18.

This is one of the proteins that binds to the 5S RNA in the ribosome where it forms part of the central protuberance. The sequence is that of Large ribosomal subunit protein bL25 from Borreliella burgdorferi (strain ZS7) (Borrelia burgdorferi).